The following is a 724-amino-acid chain: Disks large homolog 4 (724 aa).

S-palmitoyl cysteine attachment occurs at residues C3 and C5. Positions 15–35 are disordered; sequence QDEDTPPLEHSPAHLPNQANS. PDZ domains are found at residues 65–151 and 160–246; these read EITL…VMRR and EIKL…VAKP. Residues S73 and S142 each carry the phosphoserine modification. Y240 carries the post-translational modification Phosphotyrosine. A Phosphoserine modification is found at S295. In terms of domain architecture, PDZ 3 spans 313 to 393; it reads RIVIHRGSTG…QTVTIIAQYK (81 aa). 2 positions are modified to phosphoserine: S415 and S418. At T420 the chain carries Phosphothreonine. 4 positions are modified to phosphoserine: S422, S425, S449, and S480. The 71-residue stretch at 428-498 folds into the SH3 domain; the sequence is KRGFYIRALF…PSKRRVERRE (71 aa). The region spanning 534 to 709 is the Guanylate kinase-like domain; that stretch reads ARPIIILGPT…IYHKVKRVIE (176 aa). Y580 carries the post-translational modification Phosphotyrosine. A phosphoserine mark is found at S606 and S654. Y715 carries the post-translational modification Phosphotyrosine.

The protein belongs to the MAGUK family. Interacts through its PDZ domains with ANO2 and NETO1. Interacts with KCNJ4. Interacts through its first two PDZ domains with GRIN2A, GRIN2B, GRIN2C and GRIN2D. Interacts with ERBB4. Interacts with KCNA1, KCNA2, KCNA3 and KCNA4. Interacts with LRRC4 and LRRC4B. Interacts with SYNGAP1. Interacts with ASIC3. Interacts with SEMA4C. Interacts with CXADR. Interacts with KCND2. Interacts (via first PDZ domain) with CRIPT. Interacts through its first PDZ domain with GRIK2 and KCNA4. Interacts through its second PDZ domain with the PDZ domain of NOS1 or the C-terminus of CAPON. Interacts through its third PDZ domain with NLGN1 and CRIPT, and probably with NLGN2 and NLGN3. Interacts through its guanylate kinase-like domain with DLGAP1/GKAP, DLGAP2, DLGAP3, DLGAP4, MAP1A, BEGAIN and SIPA1L1. Interacts through its guanylate kinase-like domain with KIF13B. Isoform 2 interacts through an L27 domain with HGS/HRS and the first L27 domain of CASK. Interacts with ANKS1B. Interacts with ADR1B. May interact with HTR2A. Interacts with ADAM22, KLHL17 and LGI1. Interacts with FRMPD4 (via C-terminus). Interacts with LRFN1 and LRFN2. Interacts with LRFN4. Interacts (via N-terminal tandem pair of PDZ domains) with GPER1 (via C-terminus tail motif); the interaction is direct and induces the increase of GPER1 protein levels residing at the plasma membrane surface in a estradiol-independent manner. Interacts (via N-terminus tandem pair of PDZ domains) with NOS1 (via N-terminal domain). Interacts with SHANK3. Interacts with GPR85. Interacts with CACNG2 and MPP2 (via the SH3-Guanylate kinase-like sub-module). Interacts with ADGRB1. Found in a complex with PRR7 and GRIN1. Interacts (via PDZ3 domain and to lesser degree via PDZ2 domain) with PRR7. Component of the postsynaptic hippocampal AMPA-type glutamate receptor (AMPAR) complex, at least composed of pore forming AMPAR subunits GRIA1, GRIA2 and GRIA3 and AMPAR auxiliary proteins SHISA6 and SHISA7. Interacts (via its first two PDZ domains) with SHISA6 and SHISA7 (via PDZ-binding motif); the interaction is direct. Interacts (via PDZ domain 2) with SEMA4F (via PDZ-binding motif); this interaction may promote translocation of DLG4/SAP90 to the membrane. Interacts with RPH3A and GRIN2A; this ternary complex regulates NMDA receptor composition at postsynaptic membranes. Interacts with ABR and BCR. Interacts with DGKI (via PDZ-binding motif); controls the localization of DGKI to the synapse. Interacts with C9orf72, SMCR8 and RAB39B. Interacts with ZDHHC5. Interacts with PTEN (via PDZ domain-binding motif); the interaction is induced by NMDA and is required for PTEN location at postsynaptic density. Found in a complex with GRIA1, GRIA2, GRIA3, GRIA4, CACNG8 and CNIH2. Interacts with FAM81A; the interaction facilitates condensate formation via liquid-liquid phase separation. Interacts with ADGRL3. Interacts with SORCS3. Post-translationally, palmitoylated. Palmitoylation is required for targeting to postsynaptic density, plasma membrane and synapses. Palmitoylation by ZDHHC2 occurs when the synaptic activity decreases and induces DLG4 synaptic clustering. Palmitoylation by ZDHHC15 regulates trafficking to the postsynaptic density and function in synaptogenesis. Palmitoylation may play a role in glutamate receptor GRIA1 synapse clustering. Depalmitoylated by ABHD17A and ABHD17B and to a lesser extent by ABHD17C, ABHD12, ABHD13, LYPLA1 and LYPLA2. Undergoes rapid synaptic palmitoylation/depalmitoylation cycle during neuronal development which slows down in mature neurons. In terms of processing, ubiquitinated by MDM2 in response to NMDA receptor activation, leading to proteasome-mediated degradation of DLG4 which is required for AMPA receptor endocytosis. In terms of tissue distribution, expressed in brain (at protein level). Detected in juxtaparanodal zones in the central nervous system and at nerve terminal plexuses of basket cells in the cerebellum. Expressed in cerebrum. Expressed in hippocampal neurons (at protein level). Isoform 1 and isoform 2: highly expressed in cerebellum, cortex, hippocampus, and corpus striatum.

It localises to the cell membrane. It is found in the postsynaptic density. Its subcellular location is the synapse. The protein resides in the cytoplasm. The protein localises to the cell projection. It localises to the axon. It is found in the dendritic spine. Its subcellular location is the dendrite. The protein resides in the presynapse. In terms of biological role, postsynaptic scaffolding protein that plays a critical role in synaptogenesis and synaptic plasticity by providing a platform for the postsynaptic clustering of crucial synaptic proteins. Interacts with the cytoplasmic tail of NMDA receptor subunits and shaker-type potassium channels. Required for synaptic plasticity associated with NMDA receptor signaling. Overexpression or depletion of DLG4 changes the ratio of excitatory to inhibitory synapses in hippocampal neurons. May reduce the amplitude of ASIC3 acid-evoked currents by retaining the channel intracellularly. May regulate the intracellular trafficking of ADR1B. Also regulates AMPA-type glutamate receptor (AMPAR) immobilization at postsynaptic density keeping the channels in an activated state in the presence of glutamate and preventing synaptic depression. Under basal conditions, cooperates with FYN to stabilize palmitoyltransferase ZDHHC5 at the synaptic membrane through FYN-mediated phosphorylation of ZDHHC5 and its subsequent inhibition of association with endocytic proteins. The sequence is that of Disks large homolog 4 from Rattus norvegicus (Rat).